Here is a 507-residue protein sequence, read N- to C-terminus: Mitochondrial antiviral-signaling protein (507 aa).

The Cytoplasmic portion of the chain corresponds to 1–482 (MTFAEEKTYK…PCASSVSWAK (482 aa)). Residues Lys7 and Lys10 each participate in a glycyl lysine isopeptide (Lys-Gly) (interchain with G-Cter in ubiquitin) cross-link. Residues 10–77 (KYIRYNHSKF…WVEVFIRALR (68 aa)) enclose the CARD domain. Residues 10-77 (KYIRYNHSKF…WVEVFIRALR (68 aa)) form a required for interaction with NLRX1 region. A lipid anchor (S-palmitoyl cysteine) is attached at Cys79. Disordered stretches follow at residues 123 to 238 (FAAG…TNLS), 250 to 326 (TTLS…NIAP), and 350 to 401 (ASAS…SKPG). An interaction with TRAF2 region spans residues 143–147 (PVQDT). 6 positions are modified to phosphoserine: Ser152, Ser157, Ser172, Ser178, Ser186, and Ser220. Residues 153–158 (PVENSE) form an interaction with TRAF6 region. Arg234 carries the asymmetric dimethylarginine modification. Composition is skewed to low complexity over residues 250 to 266 (TTLS…KGAG) and 281 to 293 (VPTN…SVPS). Ser256 carries the post-translational modification Phosphoserine. Residues 300–325 (NTMSSKLPISTKSTAATPSTVPTNIA) are compositionally biased toward polar residues. Lys305 is covalently cross-linked (Glycyl lysine isopeptide (Lys-Gly) (interchain with G-Cter in ubiquitin)). The interval 340–507 (PSKVTASVAK…MLYRSRHLAQ (168 aa)) is interaction with DHX33. A compositionally biased stretch (basic and acidic residues) spans 359-368 (RNNKQAKETL). Polar residues predominate over residues 374–391 (VVTTGSSLTRPDISSRSL). A Phosphoserine modification is found at Ser387. The pLxIS motif motif lies at 419–422 (LAIS). Residue Ser422 is modified to Phosphoserine; by TBK1. Positions 423–474 (PSTSLGSEPNHGPEENEYSSFRIQVDKSPSVDLLGSPEPLATQQSPEEEEPC) are disordered. The interval 435 to 440 (PEENEY) is interaction with TRAF6. A helical transmembrane segment spans residues 483-500 (WLGATSALLAAFLAVMLY). Residues 501–507 (RSRHLAQ) are Mitochondrial intermembrane-facing.

Self-associates and polymerizes (via CARD domains) to form 400 nM long three-stranded helical filaments on mitochondria, filament nucleation requires interaction with RIGI whose CARD domains act as a template for filament assembly. Interacts with RIGI, IFIH1/MDA5, TRAF2, TRAF6 and C1QBP. May interact with FADD, RIPK1, CHUK and IKBKB. Interacts (when phosphorylated) with IRF3; following activation and phosphorylation on the pLxIS motif by TBK1, recruits IRF3. Interacts with NLRX1. Interaction with NLRX1 requires the CARD domain. Interacts with PSMA7. Interacts with TRAFD1. Interacts (via C-terminus) with PCBP2 in a complex containing MAVS/IPS1, PCBP2 and ITCH. Interacts with CYLD. Interacts with SRC. Interacts with DHX58/LGP2 and IKBKE. Interacts with STING1. Interacts with IFIT3 (via N-terminus). Interacts with TBK1 only in the presence of IFIT3. Interacts with TTLL12; the interaction prevents MAVS binding to TBK1 and IKBKE. Interacts with MUL1. Interacts with ANKRD17. Interacts with NDFIP1. Interacts with SMURF1; the interaction is mediated by NDFIP1 and leads to MAVS ubiquitination and degradation. Interacts with UBXN1; this interaction inhibits MAVS-mediated antiviral pathway. Interacts (via C-terminus) with GPATCH3; the interaction is markedly increased upon viral infection. Directly interacts (via CARD domain) with ATG5 and ATG12, either as ATG5 and ATG12 monomers or as ATG12-ATG5 conjugates. Interacts with DHX33 (via the helicase C-terminal domain). Interacts with DDX3X (via C-terminus); this interaction may occur rapidly, but transiently after viral infection. The interaction with DDX3X potentiates MAVS-mediated IFNB induction. Conversely inhibition of this interaction prevents MAVS-mediated IFNB induction. Transiently interacts with TRAF3 early during viral infection. Interacts with CLPB. Interacts with TRAF3IP3. Interacts with TOMM70; the interaction is enhanced by virus infection. Interacts with ZNFX1. Interacts with DHX15. Interacts with N4BP3; this interaction promotes the polyubiquitination of MAVS. Interacts with TAX1BP1; this interaction induces MAVS polyubiquitination. Interacts with NLRP3; promoting NLRP3 recruitment to mitochondria and activation of the NLRP3 inflammasome. Interacts with ECSIT; this interaction bridges RIGI to the MAVS complex at the mitochondrion. Interacts with UBL7; this interaction promotes MAVS 'Lys-27'-linked ubiquitination leading to type I interferon production. Interacts (via transmembrane domain) with SMIM30/MAVI1 (via transmembrane domain); the interaction disrupts MAVS interaction with RIGI and inhibits MAVS aggregation, resulting in the repression of type I interferon signaling and innate immune responses. In terms of processing, following activation, phosphorylated by TBK1 at Ser-422 in the pLxIS motif. The phosphorylated pLxIS motif constitutes an IRF3-binding motif, leading to recruitment of the transcription factor IRF3 to induce type-I interferons and other cytokines. Post-translationally, ubiquitinated. Undergoes 'Lys-48'-linked polyubiquitination catalyzed by ITCH; ITCH-dependent polyubiquitination is mediated by the interaction with PCBP2 and leads to MAVS/IPS1 proteasomal degradation. Ubiquitinated by RNF125, leading to its degradation by the proteasome. Undergoes 'Lys-48'-linked ubiquitination catalyzed by SMURF1. Undergoes 'Lys-48'-linked ubiquitination catalyzed by MARCHF5 at Lys-7, leading to proteasomal degradation. Ubiquitinated via 'Lys-63'-linked ubiquitination at Lys-10 by TRIM31, promoting MAVS polymerization and formation of three-stranded helical filaments on mitochondria. Undergoes 'Lys-63'-linked ubiquitination leading to enhanced interaction between MAVS and TRAF2. Undergoes 'Lys-27'-linked ubiquitination by UBE2N and TRIM21 leading to enhanced interaction between MAVS and TBK1. Deubiquitinated by USP10 leading to attenuation of RIGI-mediated MAVS aggregation and production of type I interferon. Undergoes 'Lys-48'-linked polyubiquitination catalyzed by RNF115 leading to its degradation. Proteolytically cleaved by apoptotic caspases during apoptosis, leading to its inactivation. Cleavage by CASP3 during virus-induced apoptosis inactivates it, preventing cytokine overproduction. In terms of processing, palmitoylated by ZHDDC4. Palmitoylation promotes MAVS stabilization and activation by inhibiting 'Lys-48'- but facilitating 'Lys-63'-linked ubiquitination.

It is found in the mitochondrion outer membrane. The protein resides in the mitochondrion. It localises to the peroxisome. Adapter required for innate immune defense against viruses. Acts downstream of DHX33, RIGI and IFIH1/MDA5, which detect intracellular dsRNA produced during viral replication, to coordinate pathways leading to the activation of NF-kappa-B, IRF3 and IRF7, and to the subsequent induction of antiviral cytokines such as IFN-beta and RANTES (CCL5). Peroxisomal and mitochondrial MAVS act sequentially to create an antiviral cellular state. Upon viral infection, peroxisomal MAVS induces the rapid interferon-independent expression of defense factors that provide short-term protection, whereas mitochondrial MAVS activates an interferon-dependent signaling pathway with delayed kinetics, which amplifies and stabilizes the antiviral response. May activate the same pathways following detection of extracellular dsRNA by TLR3. May protect cells from apoptosis. Involved in NLRP3 inflammasome activation by mediating NLRP3 recruitment to mitochondria. The sequence is that of Mitochondrial antiviral-signaling protein (Mavs) from Rattus norvegicus (Rat).